The chain runs to 188 residues: Insulin-like peptide INSL6 (188 aa).

The signal sequence occupies residues 1 to 22 (MKQLCCSCLLWLGLLLAPFSQE). 3 disulfides stabilise this stretch: Cys33-Cys169, Cys45-Cys182, and Cys168-Cys173. The propeptide at 53-158 (FSMEEQSPMT…SGLFWGNHPQ (106 aa)) is connecting peptide.

This sequence belongs to the insulin family. Testis and prostate specific.

Its subcellular location is the secreted. Functionally, may have a role in sperm development and fertilization. The sequence is that of Insulin-like peptide INSL6 (Insl6) from Rattus norvegicus (Rat).